We begin with the raw amino-acid sequence, 376 residues long: N-acetyldiaminopimelate deacetylase (376 aa).

Aspartate 69 is a catalytic residue. The active-site Proton acceptor is the glutamate 128.

The protein belongs to the peptidase M20A family. N-acetyldiaminopimelate deacetylase subfamily.

It catalyses the reaction N-acetyl-(2S,6S)-2,6-diaminopimelate + H2O = (2S,6S)-2,6-diaminopimelate + acetate. It functions in the pathway amino-acid biosynthesis; L-lysine biosynthesis via DAP pathway; LL-2,6-diaminopimelate from (S)-tetrahydrodipicolinate (acetylase route): step 3/3. Functionally, catalyzes the conversion of N-acetyl-diaminopimelate to diaminopimelate and acetate. The chain is N-acetyldiaminopimelate deacetylase from Bacillus cereus (strain ATCC 14579 / DSM 31 / CCUG 7414 / JCM 2152 / NBRC 15305 / NCIMB 9373 / NCTC 2599 / NRRL B-3711).